The chain runs to 51 residues: Large ribosomal subunit protein eL39z (51 aa).

This sequence belongs to the eukaryotic ribosomal protein eL39 family.

The sequence is that of Large ribosomal subunit protein eL39z (RPL39A) from Oryza sativa subsp. japonica (Rice).